A 112-amino-acid polypeptide reads, in one-letter code: Nitrogen regulatory protein P-II (112 aa).

The residue at position 51 (Tyr51) is an O-UMP-tyrosine.

This sequence belongs to the P(II) protein family. Homotrimer. Post-translationally, uridylylated/deuridylylated by GlnD.

Functionally, P-II indirectly controls the transcription of the glutamine synthetase gene (GlnA). P-II prevents NR-II-catalyzed conversion of NR-I to NR-I-phosphate, the transcriptional activator of GlnA. When P-II is uridylylated to P-II-UMP, these events are reversed. When the ratio of Gln to 2-ketoglutarate decreases, P-II is uridylylated to P-II-UMP, which causes the deadenylation of glutamine synthetase by GlnE, so activating the enzyme. This Haemophilus influenzae (strain ATCC 51907 / DSM 11121 / KW20 / Rd) protein is Nitrogen regulatory protein P-II (glnB).